Consider the following 249-residue polypeptide: DNA repair protein RecO (249 aa).

It belongs to the RecO family.

Functionally, involved in DNA repair and RecF pathway recombination. The sequence is that of DNA repair protein RecO from Lawsonia intracellularis (strain PHE/MN1-00).